Consider the following 507-residue polypeptide: (6-4) photolyase (507 aa).

6,7-dimethyl-8-(1-D-ribityl)lumazine-binding positions include 9–10 (GD), 32–40 (CEVMAEASY), and glycine 105. Residues 265–269 (HSLLS) and asparagine 273 each bind FAD. Residue cysteine 350 coordinates [4Fe-4S] cluster. FAD contacts are provided by residues 363–366 (YAHH), aspartate 397, and asparagine 406. [4Fe-4S] cluster is bound by residues cysteine 438, cysteine 441, and cysteine 454.

This sequence belongs to the iron-sulfur bacterial cryptochrome/photolyase (FeS-BCP) family. The cofactor is FAD. 6,7-dimethyl-8-(1-D-ribityl)lumazine is required as a cofactor. [4Fe-4S] cluster serves as cofactor.

The enzyme catalyses (6-4) photoproduct (in DNA) = 2 pyrimidine residues (in DNA).. Photolyase involved in the repair of UV-induced (6-4) lesions in DNA. Catalyzes the photoreactivation of (6-4) pyrimidine-pyrimidone photoproducts by using blue-light energy. Can repair (6-4) photoproducts in ssDNA as well as in dsDNA. This is (6-4) photolyase from Agrobacterium fabrum (strain C58 / ATCC 33970) (Agrobacterium tumefaciens (strain C58)).